We begin with the raw amino-acid sequence, 98 residues long: NADH-ubiquinone oxidoreductase chain 4L (98 aa).

3 helical membrane passes run 1–21 (MSMV…GLLM), 29–49 (SLLC…MTIL), and 61–81 (IILL…LVMV).

This sequence belongs to the complex I subunit 4L family. As to quaternary structure, core subunit of respiratory chain NADH dehydrogenase (Complex I) which is composed of 45 different subunits.

The protein resides in the mitochondrion inner membrane. The catalysed reaction is a ubiquinone + NADH + 5 H(+)(in) = a ubiquinol + NAD(+) + 4 H(+)(out). Functionally, core subunit of the mitochondrial membrane respiratory chain NADH dehydrogenase (Complex I) which catalyzes electron transfer from NADH through the respiratory chain, using ubiquinone as an electron acceptor. Part of the enzyme membrane arm which is embedded in the lipid bilayer and involved in proton translocation. This is NADH-ubiquinone oxidoreductase chain 4L (MT-ND4L) from Phocarctos hookeri (Hooker's sea lion).